The chain runs to 974 residues: Alpha-1,4 glucan phosphorylase L-2 isozyme, chloroplastic/amyloplastic (974 aa).

The N-terminal 81 residues, 1–81 (MATFAVSGLN…LDVFQPDSTS (81 aa)), are a transit peptide targeting the chloroplast. Residues 509 to 551 (ADVEKAADEEQEEEGKDDSKDEETEAVKAETTNEEEETEVKKV) form a disordered region. Acidic residues predominate over residues 517 to 532 (EEQEEEGKDDSKDEET). At lysine 820 the chain carries N6-(pyridoxal phosphate)lysine.

It belongs to the glycogen phosphorylase family. Requires pyridoxal 5'-phosphate as cofactor. Leaves.

The protein resides in the plastid. It is found in the chloroplast. It localises to the amyloplast. It catalyses the reaction [(1-&gt;4)-alpha-D-glucosyl](n) + phosphate = [(1-&gt;4)-alpha-D-glucosyl](n-1) + alpha-D-glucose 1-phosphate. Phosphorylase is an important allosteric enzyme in carbohydrate metabolism. Enzymes from different sources differ in their regulatory mechanisms and in their natural substrates. However, all known phosphorylases share catalytic and structural properties. This chain is Alpha-1,4 glucan phosphorylase L-2 isozyme, chloroplastic/amyloplastic (STP-1), found in Solanum tuberosum (Potato).